Consider the following 518-residue polypeptide: 3-phosphoshikimate 1-carboxyvinyltransferase 1, chloroplastic (518 aa).

The N-terminal 74 residues, 1–74 (MAQISSMGQG…RISASVVTAQ (74 aa)), are a transit peptide targeting the chloroplast. 3-phosphoshikimate-binding residues include Lys97, Ser98, and Arg102. Lys97 is a binding site for phosphoenolpyruvate. Gly175 and Arg205 together coordinate phosphoenolpyruvate. 6 residues coordinate 3-phosphoshikimate: Ser252, Ser253, Gln254, Ser280, Asp405, and Lys432. Gln254 is a binding site for phosphoenolpyruvate. The Proton acceptor role is filled by Asp405. Residues Arg436, Arg478, and Lys503 each coordinate phosphoenolpyruvate.

The protein belongs to the EPSP synthase family.

The protein localises to the plastid. Its subcellular location is the chloroplast. The enzyme catalyses 3-phosphoshikimate + phosphoenolpyruvate = 5-O-(1-carboxyvinyl)-3-phosphoshikimate + phosphate. It functions in the pathway metabolic intermediate biosynthesis; chorismate biosynthesis; chorismate from D-erythrose 4-phosphate and phosphoenolpyruvate: step 6/7. In terms of biological role, catalyzes the transfer of the enolpyruvyl moiety of phosphoenolpyruvate (PEP) to the 5-hydroxyl of shikimate-3-phosphate (S3P) to produce enolpyruvyl shikimate-3-phosphate and inorganic phosphate. This Nicotiana tabacum (Common tobacco) protein is 3-phosphoshikimate 1-carboxyvinyltransferase 1, chloroplastic (EPSPS-1).